The sequence spans 308 residues: Mannan endo-1,4-beta-mannosidase (308 aa).

Glutamate 125 serves as the catalytic Proton donor. Glutamate 220 (nucleophile) is an active-site residue. Residues 284 to 308 (DGLQETSKPSTVFTDDNGGHPEPPT) form a disordered region. Over residues 287 to 297 (QETSKPSTVFT) the composition is skewed to polar residues.

The protein belongs to the glycosyl hydrolase 5 (cellulase A) family.

The enzyme catalyses Random hydrolysis of (1-&gt;4)-beta-D-mannosidic linkages in mannans, galactomannans and glucomannans.. Its function is as follows. Catalyzes the endo hydrolysis of beta-1,4-linked mannan, galactomannan and glucomannan. It is able to hydrolyze mannosidic linkages that are flanked by mannose or glucose. The polypeptide is Mannan endo-1,4-beta-mannosidase (Salipaludibacillus agaradhaerens (Bacillus agaradhaerens)).